Reading from the N-terminus, the 900-residue chain is DNA mismatch repair protein MutS (900 aa).

Positions 1 to 88 (MPGPSDDPTE…PAWAHHSQVD (88 aa)) are disordered. The segment covering 56–68 (APADHNAADHDSN) has biased composition (basic and acidic residues). Position 714-721 (714-721 (GPNASGKS)) interacts with ATP.

It belongs to the DNA mismatch repair MutS family.

Its function is as follows. This protein is involved in the repair of mismatches in DNA. It is possible that it carries out the mismatch recognition step. This protein has a weak ATPase activity. The chain is DNA mismatch repair protein MutS from Parasynechococcus marenigrum (strain WH8102).